A 220-amino-acid polypeptide reads, in one-letter code: Putative DNA repair glycosylase MJ1434 (220 aa).

Residues Cys-202, Cys-208, Cys-211, and Cys-217 each contribute to the [4Fe-4S] cluster site.

The protein belongs to the Nth/MutY family. [4Fe-4S] cluster serves as cofactor.

The polypeptide is Putative DNA repair glycosylase MJ1434 (Methanocaldococcus jannaschii (strain ATCC 43067 / DSM 2661 / JAL-1 / JCM 10045 / NBRC 100440) (Methanococcus jannaschii)).